Reading from the N-terminus, the 444-residue chain is tRNA-2-methylthio-N(6)-dimethylallyladenosine synthase (444 aa).

The MTTase N-terminal domain occupies 10–126 (SSFYIHTFGC…LAGLVAGLRE (117 aa)). The [4Fe-4S] cluster site is built by cysteine 19, cysteine 55, cysteine 89, cysteine 163, cysteine 167, and cysteine 170. A Radical SAM core domain is found at 149 to 379 (RAGSISAFLP…IELQNAISRE (231 aa)). Residues 382-444 (QREIGKTVEV…TSATLSGEAV (63 aa)) form the TRAM domain.

The protein belongs to the methylthiotransferase family. MiaB subfamily. Monomer. It depends on [4Fe-4S] cluster as a cofactor.

The protein localises to the cytoplasm. The enzyme catalyses N(6)-dimethylallyladenosine(37) in tRNA + (sulfur carrier)-SH + AH2 + 2 S-adenosyl-L-methionine = 2-methylsulfanyl-N(6)-dimethylallyladenosine(37) in tRNA + (sulfur carrier)-H + 5'-deoxyadenosine + L-methionine + A + S-adenosyl-L-homocysteine + 2 H(+). Functionally, catalyzes the methylthiolation of N6-(dimethylallyl)adenosine (i(6)A), leading to the formation of 2-methylthio-N6-(dimethylallyl)adenosine (ms(2)i(6)A) at position 37 in tRNAs that read codons beginning with uridine. This is tRNA-2-methylthio-N(6)-dimethylallyladenosine synthase from Chlorobaculum tepidum (strain ATCC 49652 / DSM 12025 / NBRC 103806 / TLS) (Chlorobium tepidum).